The chain runs to 342 residues: N-acetyl-gamma-glutamyl-phosphate reductase (342 aa).

C149 is a catalytic residue.

The protein belongs to the NAGSA dehydrogenase family. Type 1 subfamily.

It localises to the cytoplasm. The catalysed reaction is N-acetyl-L-glutamate 5-semialdehyde + phosphate + NADP(+) = N-acetyl-L-glutamyl 5-phosphate + NADPH + H(+). It functions in the pathway amino-acid biosynthesis; L-arginine biosynthesis; N(2)-acetyl-L-ornithine from L-glutamate: step 3/4. Functionally, catalyzes the NADPH-dependent reduction of N-acetyl-5-glutamyl phosphate to yield N-acetyl-L-glutamate 5-semialdehyde. The protein is N-acetyl-gamma-glutamyl-phosphate reductase of Nitrosomonas eutropha (strain DSM 101675 / C91 / Nm57).